A 177-amino-acid chain; its full sequence is Large ribosomal subunit protein uL6 (177 aa).

The protein belongs to the universal ribosomal protein uL6 family. As to quaternary structure, part of the 50S ribosomal subunit.

In terms of biological role, this protein binds to the 23S rRNA, and is important in its secondary structure. It is located near the subunit interface in the base of the L7/L12 stalk, and near the tRNA binding site of the peptidyltransferase center. This chain is Large ribosomal subunit protein uL6, found in Edwardsiella ictaluri (strain 93-146).